A 266-amino-acid chain; its full sequence is Gas vesicle protein L (266 aa).

The protein belongs to the gas vesicle GvpF/GvpL family.

The protein localises to the gas vesicle. Might be involved in nucleating gas vesicle formation. A minor component of the gas vesicle. Gas vesicles are hollow, gas filled proteinaceous nanostructures found in some microorganisms. It is not clear what function gas vesicles perform in soil bacteria. The protein is Gas vesicle protein L of Streptomyces sp. (strain CB03234).